A 272-amino-acid chain; its full sequence is MPNRTVFFVSDGTGITAETFGNSILAQFSAKPRHVRRPFIDTPDKAYQVVREINDTAGREGKRPIVFITLIDTEVRGIIRSAHCLVLDMLGTFVEPLEAEFGIKSNHRVGRFDDISKSQEYTDRIEAINFSLAHDDGQSSKNLDIADVILVGVSRSGKTPTSLYLAMQHGIKAANYPLIPEDFDRGALPSALVPHKKKCFGLTIAPERLREIRHERRPNSKYASLENCRLEVSAAESMMGREGIAWLSSTHKSIEEIATTILRDIRPDRLIY.

An ADP-binding site is contributed by 152 to 159 (GVSRSGKT).

It belongs to the pyruvate, phosphate/water dikinase regulatory protein family. PSRP subfamily.

The enzyme catalyses [pyruvate, water dikinase] + ADP = [pyruvate, water dikinase]-phosphate + AMP + H(+). The catalysed reaction is [pyruvate, water dikinase]-phosphate + phosphate + H(+) = [pyruvate, water dikinase] + diphosphate. In terms of biological role, bifunctional serine/threonine kinase and phosphorylase involved in the regulation of the phosphoenolpyruvate synthase (PEPS) by catalyzing its phosphorylation/dephosphorylation. The polypeptide is Putative phosphoenolpyruvate synthase regulatory protein (Methylibium petroleiphilum (strain ATCC BAA-1232 / LMG 22953 / PM1)).